A 701-amino-acid polypeptide reads, in one-letter code: Low-density lipoprotein receptor-related protein 12 (701 aa).

Topologically, residues 1–334 are extracellular; sequence GKSEEPNCAC…ENCPVIVPTR (334 aa). 2 LDL-receptor class A domains span residues 7-43 and 56-97; these read NCAC…EICA and PCAY…IDCD. 7 cysteine pairs are disulfide-bonded: Cys-8–Cys-20, Cys-15–Cys-33, Cys-27–Cys-42, Cys-57–Cys-74, Cys-64–Cys-87, Cys-81–Cys-96, and Cys-101–Cys-127. Positions 101–214 constitute a CUB domain; it reads CGQWLKYFYG…RGFNATYQVD (114 aa). Residues Asn-126 and Asn-208 are each glycosylated (N-linked (GlcNAc...) asparagine). 3 consecutive LDL-receptor class A domains span residues 216 to 253, 254 to 291, and 292 to 328; these read FCLP…INCT, MCQK…KNCF, and FCQP…ENCP. 9 disulfide bridges follow: Cys-217–Cys-230, Cys-224–Cys-243, Cys-237–Cys-252, Cys-255–Cys-268, Cys-262–Cys-281, Cys-275–Cys-290, Cys-293–Cys-305, Cys-300–Cys-318, and Cys-312–Cys-327. Asn-251 is a glycosylation site (N-linked (GlcNAc...) asparagine). Asn-283 carries an N-linked (GlcNAc...) asparagine glycan. The chain crosses the membrane as a helical span at residues 335-355; the sequence is VITAAVIGSLICGLLLVIALG. Residues 356 to 701 lie on the Cytoplasmic side of the membrane; it reads CTCKLYSLRM…TSDDEALLLC (346 aa). 4 disordered regions span residues 465–520, 535–565, 590–612, and 643–665; these read ADGD…LPQK, ASSS…SPAR, SSVS…REDD, and DQGQ…SNRD. Polar residues-rich tracts occupy residues 590–599 and 643–656; these read SSVSQNQSPL and DQGQ…SATN.

It belongs to the LDLR family. In terms of assembly, may interact with RACK1, ZFYVE9 and NMRK2.

Its subcellular location is the membrane. The protein localises to the coated pit. Its function is as follows. Probable receptor, which may be involved in the internalization of lipophilic molecules and/or signal transduction. May act as a tumor suppressor. The protein is Low-density lipoprotein receptor-related protein 12 (LRP12) of Macaca fascicularis (Crab-eating macaque).